The following is a 525-amino-acid chain: Probable CoA ligase CCL9 (525 aa).

ATP-binding positions include 171-179, 311-316, Asp-395, 407-410, and Lys-501; these read TSGTTSRPK, EAYAMT, and LVGR. Residues 242 to 311 form an SBD1 region; that stretch reads SASTFWSDMI…EESFGAPVLE (70 aa). Positions 312 to 375 are SBD2; it reads AYAMTEAAHL…IRGPNVTKGY (64 aa).

The protein belongs to the ATP-dependent AMP-binding enzyme family.

Its subcellular location is the cytoplasm. It localises to the cytosol. This is Probable CoA ligase CCL9 from Humulus lupulus (European hop).